Consider the following 308-residue polypeptide: 4-hydroxyproline 2-epimerase (308 aa).

The active-site Proton acceptor is Cys88. Residues 89–90 (GH), His208, and Asp232 each bind substrate. Cys236 acts as the Proton donor in catalysis. 237 to 238 (GT) lines the substrate pocket.

This sequence belongs to the proline racemase family.

It catalyses the reaction trans-4-hydroxy-L-proline = cis-4-hydroxy-D-proline. Catalyzes the epimerization of trans-4-hydroxy-L-proline (t4LHyp) to cis-4-hydroxy-D-proline (c4DHyp). Is likely involved in a degradation pathway that converts t4LHyp to alpha-ketoglutarate. Can also catalyze the epimerization of trans-3-hydroxy-L-proline (t3LHyp) to cis-3-hydroxy-D-proline (c3DHyp), albeit with 19-fold lower efficiency. Displays no proline racemase activity. The protein is 4-hydroxyproline 2-epimerase of Chromobacterium violaceum (strain ATCC 12472 / DSM 30191 / JCM 1249 / CCUG 213 / NBRC 12614 / NCIMB 9131 / NCTC 9757 / MK).